Consider the following 439-residue polypeptide: D-inositol 3-phosphate glycosyltransferase (439 aa).

Histidine 21 provides a ligand contact to 1D-myo-inositol 3-phosphate. UDP-N-acetyl-alpha-D-glucosamine contacts are provided by residues 27 to 28 (QP) and glycine 35. 1D-myo-inositol 3-phosphate is bound by residues 32 to 37 (DAGGMN), lysine 90, tyrosine 123, threonine 147, and arginine 167. Positions 241, 246, and 299 each coordinate UDP-N-acetyl-alpha-D-glucosamine. Mg(2+)-binding residues include tyrosine 308, arginine 309, and alanine 311. UDP-N-acetyl-alpha-D-glucosamine-binding residues include glutamate 321 and glutamate 329. Threonine 335 contacts Mg(2+).

Belongs to the glycosyltransferase group 1 family. MshA subfamily. In terms of assembly, homodimer.

It carries out the reaction 1D-myo-inositol 3-phosphate + UDP-N-acetyl-alpha-D-glucosamine = 1D-myo-inositol 2-acetamido-2-deoxy-alpha-D-glucopyranoside 3-phosphate + UDP + H(+). In terms of biological role, catalyzes the transfer of a N-acetyl-glucosamine moiety to 1D-myo-inositol 3-phosphate to produce 1D-myo-inositol 2-acetamido-2-deoxy-glucopyranoside 3-phosphate in the mycothiol biosynthesis pathway. This Mycobacterium sp. (strain JLS) protein is D-inositol 3-phosphate glycosyltransferase.